A 451-amino-acid polypeptide reads, in one-letter code: Phenolic glucoside malonyltransferase 2 (451 aa).

Catalysis depends on His-165, which acts as the Proton acceptor. Positions 165–169 match the HXXXD motif motif; that stretch reads HAVLD. Residues His-270 and 272–273 each bind malonyl-CoA; that span reads ST. Asp-395 acts as the Proton acceptor in catalysis. Residues 395–399 carry the DFGWG motif motif; it reads DFGWG.

The protein belongs to the plant acyltransferase family. Phenolic glucoside malonyltransferase subfamily.

The catalysed reaction is a flavonol 7-O-beta-D-glucoside + malonyl-CoA = a flavonol 7-O-(6-O-malonyl-beta-D-glucoside) + CoA. Functionally, malonyltransferase acting on xenobiotic glucosides. Has activity toward 2-Naphthol glucoside (2NAG), 1-Naphthol glucoside (1NAG), kaempferol 7-O-glucoside, hydroxycoumarin glucosides and phenol-glucosides, but not toward kaempferol 3-O-glucoside or daidzin. Prefers phenol glucosides rather than naphtol glucosides. In vivo, seems to be involved in the malonylation of 4-methylumbelliferone glucoside or 4-nitrophenyl glucoside while PMAT1 would be involved in the malonylation of 2-Naphthol glucoside. The chain is Phenolic glucoside malonyltransferase 2 (PMAT2) from Arabidopsis thaliana (Mouse-ear cress).